Consider the following 84-residue polypeptide: Large ribosomal subunit protein bL27 (84 aa).

The tract at residues 1 to 22 (MAHKKAGGSTRNGRDSESKRLG) is disordered.

This sequence belongs to the bacterial ribosomal protein bL27 family.

This Shewanella pealeana (strain ATCC 700345 / ANG-SQ1) protein is Large ribosomal subunit protein bL27.